A 313-amino-acid polypeptide reads, in one-letter code: Small ribosomal subunit protein uS2 (313 aa).

Serine 2 bears the N-acetylserine mark. 2 laminin-binding regions span residues 161 to 180 and 205 to 229; these read IPCNNKGHHSVGLMWWMLAR and RDPEEIEKEEQAAAEKAVGKEEFQG. [DE]-W-[ST] repeat units lie at residues 230–232 and 245–247; these read EWS and DWS. A laminin-binding region spans residues 242–313; the sequence is EVADWSEGVA…DWGGTTSDWS (72 aa). Low complexity predominate over residues 262–274; sequence PATAAAAAAAAPP. Positions 262-313 are disordered; it reads PATAAAAAAAAPPVKTGEVFSEDWSTQPATDDWSTAPTAQASDWGGTTSDWS. [DE]-W-[ST] repeat units follow at residues 284–286, 293–295, and 311–313; these read DWS. A compositionally biased stretch (polar residues) spans 284–313; that stretch reads DWSTQPATDDWSTAPTAQASDWGGTTSDWS.

Belongs to the universal ribosomal protein uS2 family. In terms of assembly, monomer (37LRP) and homodimer (67LR). Component of the small ribosomal subunit. Mature ribosomes consist of a small (40S) and a large (60S) subunit. The 40S subunit contains about 33 different proteins and 1 molecule of RNA (18S). The 60S subunit contains about 49 different proteins and 3 molecules of RNA (28S, 5.8S and 5S). Interacts with rps21. Interacts with several laminins including at least lamb1. Interacts with mdk. Post-translationally, acylated. Acylation may be a prerequisite for conversion of the monomeric 37 kDa laminin receptor precursor (37LRP) to the mature dimeric 67 kDa laminin receptor (67LR), and may provide a mechanism for membrane association. In terms of processing, cleaved by stromelysin-3 (ST3) at the cell surface. Cleavage by stromelysin-3 may be a mechanism to alter cell-extracellular matrix interactions.

It localises to the cell membrane. Its subcellular location is the cytoplasm. The protein resides in the nucleus. Its function is as follows. Required for the assembly and/or stability of the 40S ribosomal subunit. Required for the processing of the 20S rRNA-precursor to mature 18S rRNA in a late step of the maturation of 40S ribosomal subunits. Also functions as a cell surface receptor for laminin. Plays a role in cell adhesion to the basement membrane and in the consequent activation of signaling transduction pathways. May play a role in cell fate determination and tissue morphogenesis. The polypeptide is Small ribosomal subunit protein uS2 (rpsa) (Solea senegalensis (Senegalese sole)).